Here is a 220-residue protein sequence, read N- to C-terminus: CASP-like protein 4B1 (220 aa).

Residues 1–74 (MAMVTTEAAA…RWRREDMLDK (74 aa)) are Cytoplasmic-facing. The interval 13-56 (TTAATAAAEKPQDVEKPDYAPYNGASTTADGGTGARARRGDGGG) is disordered. The chain crosses the membrane as a helical span at residues 75-95 (SPLALHAAAAIFAFVALVLVA). Residues 96–109 (SNQHGDWMQFDRYQ) are Extracellular-facing. A helical transmembrane segment spans residues 110-127 (EYRYLLAIASLALLYSLA). The Cytoplasmic portion of the chain corresponds to 128–152 (QAARHAHRMRGGVDPVSSASARLLD). The helical transmembrane segment at 153-173 (FVGDQVVAYLLMSALSAAVPI) threads the bilayer. The Extracellular segment spans residues 174 to 188 (TNRMRSAVVNNFTDA). Asparagine 184 is a glycosylation site (N-linked (GlcNAc...) asparagine). Residues 189–209 (TAAAISMAFFSFVALALSAVV) traverse the membrane as a helical segment. Residues 210-220 (SGYKLSKQTYM) lie on the Cytoplasmic side of the membrane.

It belongs to the Casparian strip membrane proteins (CASP) family. Homodimer and heterodimers.

It is found in the cell membrane. The protein is CASP-like protein 4B1 of Sorghum bicolor (Sorghum).